We begin with the raw amino-acid sequence, 350 residues long: Hydroxymethylglutaryl-CoA synthase (350 aa).

Residues D33 and V34 each contribute to the (3S)-3-hydroxy-3-methylglutaryl-CoA site. The active-site Proton donor/acceptor is the E85. 2 residues coordinate (3S)-3-hydroxy-3-methylglutaryl-CoA: C117 and T158. The active-site Acyl-thioester intermediate is the C117. R204 provides a ligand contact to CoA. T206 and H239 together coordinate (3S)-3-hydroxy-3-methylglutaryl-CoA. The active-site Proton donor/acceptor is H239. K244 contributes to the CoA binding site. Residues K248, N271, and S301 each coordinate (3S)-3-hydroxy-3-methylglutaryl-CoA.

The protein belongs to the thiolase-like superfamily. Archaeal HMG-CoA synthase family. As to quaternary structure, interacts with acetoacetyl-CoA thiolase that catalyzes the precedent step in the pathway and with a DUF35 protein. The acetoacetyl-CoA thiolase/HMG-CoA synthase complex channels the intermediate via a fused CoA-binding site, which allows for efficient coupling of the endergonic thiolase reaction with the exergonic HMGCS reaction.

The enzyme catalyses acetoacetyl-CoA + acetyl-CoA + H2O = (3S)-3-hydroxy-3-methylglutaryl-CoA + CoA + H(+). Its pathway is metabolic intermediate biosynthesis; (R)-mevalonate biosynthesis; (R)-mevalonate from acetyl-CoA: step 2/3. Functionally, catalyzes the condensation of acetyl-CoA with acetoacetyl-CoA to form 3-hydroxy-3-methylglutaryl-CoA (HMG-CoA). Functions in the mevalonate (MVA) pathway leading to isopentenyl diphosphate (IPP), a key precursor for the biosynthesis of isoprenoid compounds that are building blocks of archaeal membrane lipids. This chain is Hydroxymethylglutaryl-CoA synthase, found in Methanopyrus kandleri (strain AV19 / DSM 6324 / JCM 9639 / NBRC 100938).